The chain runs to 241 residues: Putative integrase ORF241 (241 aa).

The 160-residue stretch at 82-241 (VEAKKTLVSA…AIEMLRKLAD (160 aa)) folds into the Tyr recombinase domain. Residues R119, K144, H191, R194, and H217 contribute to the active site. The active-site O-(3'-phospho-DNA)-tyrosine intermediate is Y226.

The protein belongs to the 'phage' integrase family.

This protein may encode an integrase, which is necessary for integration of the viral DNA into host genome. This is Putative integrase ORF241 from Acidianus convivator (ATV).